Here is a 156-residue protein sequence, read N- to C-terminus: MALDKSVIPLPLLVVVLLVLGWAQPSLGGESQAEKFQRQHMDSGSSPSSSSTYCNQMMKLRNMTQGWCKSVNTFVHEPLVDVQNVCFQEKVTCKNGQTNCFKSNSKMHITECRLTNGSKYPNCAYQTSPKERHIIVACEGSPYVPVHFDDSVEDST.

A signal peptide spans 1-28 (MALDKSVIPLPLLVVVLLVLGWAQPSLG). Residues K35 and R38 each contribute to the substrate site. Residue H40 is the Proton acceptor of the active site. 4 disulfides stabilise this stretch: C54/C112, C68/C123, C86/C138, and C93/C100. The N-linked (GlcNAc...) asparagine glycan is linked to N62. Residues 69 to 73 (KSVNT), K94, and R113 contribute to the substrate site. N116 carries N-linked (GlcNAc...) asparagine glycosylation. The active-site Proton donor is the H147.

The protein belongs to the pancreatic ribonuclease family. As to quaternary structure, monomer.

The protein resides in the secreted. The catalysed reaction is an [RNA] containing cytidine + H2O = an [RNA]-3'-cytidine-3'-phosphate + a 5'-hydroxy-ribonucleotide-3'-[RNA].. The enzyme catalyses an [RNA] containing uridine + H2O = an [RNA]-3'-uridine-3'-phosphate + a 5'-hydroxy-ribonucleotide-3'-[RNA].. Endonuclease that catalyzes the cleavage of RNA on the 3' side of pyrimidine nucleotides. Compared to RNASE1 it has lost activity towards dsRNA. The chain is Ribonuclease 1B pancreatic (RNASE1B) from Pygathrix nemaeus (Red-shanked douc langur).